We begin with the raw amino-acid sequence, 384 residues long: Intraflagellar transport protein 46 homolog (384 aa).

Disordered stretches follow at residues 52–151 (VNAE…PADY) and 358–384 (SATDGQKSDTPPASRSATAEIERLTLD). Basic and acidic residues predominate over residues 87–99 (EKLEEDTKRKKEP). Residues 110–138 (DEEEDEDDDDDDDDDDSDDTESDEEEEEP) show a composition bias toward acidic residues. Residues 358-374 (SATDGQKSDTPPASRSA) show a composition bias toward polar residues.

This sequence belongs to the IFT46 family.

The protein resides in the cytoplasm. It localises to the cytoskeleton. It is found in the cilium basal body. Its subcellular location is the cell projection. The protein localises to the cilium. In terms of biological role, forms part of a complex involved in intraflagellar transport (IFT), the bi-directional movement of particles required for the assembly, maintenance and functioning of primary cilia. Plays a role in early embryonic development. This chain is Intraflagellar transport protein 46 homolog, found in Danio rerio (Zebrafish).